We begin with the raw amino-acid sequence, 269 residues long: Arginine and glutamate-rich protein 1-B (269 aa).

The span at 1 to 57 (MGRSRSRSSSRSKHSKTSKHSKKRSRSRSRSRDRERKRRSKSRESKRNRRRESRSRS) shows a compositional bias: basic residues. The tract at residues 1 to 70 (MGRSRSRSSS…TATSRRDRER (70 aa)) is necessary and sufficient for RNA binding. 2 disordered regions span residues 1–109 (MGRS…MERQ) and 233–269 (RMKL…KASE). 3 stretches are compositionally biased toward basic and acidic residues: residues 64–80 (SRRD…RIDI), 89–109 (SAVD…MERQ), and 233–249 (RMKL…EEQK). Residues 71-269 (AASPPERIDI…KLSFSLKASE (199 aa)) are necessary and sufficient for transcriptional regulation.

The protein belongs to the ARGLU1 family.

The protein resides in the nucleus. It is found in the nucleus speckle. The protein localises to the chromosome. Functionally, dual function regulator of gene expression; regulator of transcription and modulator of alternative splicing. General coactivator of nuclear receptor-induced gene expression. In Danio rerio (Zebrafish), this protein is Arginine and glutamate-rich protein 1-B (arglu1b).